We begin with the raw amino-acid sequence, 273 residues long: Orotidine 5'-phosphate decarboxylase (273 aa).

K95 (proton donor) is an active-site residue.

The protein belongs to the OMP decarboxylase family. Type 2 subfamily.

The enzyme catalyses orotidine 5'-phosphate + H(+) = UMP + CO2. It functions in the pathway pyrimidine metabolism; UMP biosynthesis via de novo pathway; UMP from orotate: step 2/2. The chain is Orotidine 5'-phosphate decarboxylase from Bordetella bronchiseptica (strain ATCC BAA-588 / NCTC 13252 / RB50) (Alcaligenes bronchisepticus).